Here is a 298-residue protein sequence, read N- to C-terminus: NAD kinase (298 aa).

The active-site Proton acceptor is the Asp-80. Residues 80-81 (DG), 154-155 (ND), Arg-182, Asp-184, 195-200 (TAYALS), Ala-219, and Gln-253 contribute to the NAD(+) site.

The protein belongs to the NAD kinase family. A divalent metal cation serves as cofactor.

It is found in the cytoplasm. It carries out the reaction NAD(+) + ATP = ADP + NADP(+) + H(+). In terms of biological role, involved in the regulation of the intracellular balance of NAD and NADP, and is a key enzyme in the biosynthesis of NADP. Catalyzes specifically the phosphorylation on 2'-hydroxyl of the adenosine moiety of NAD to yield NADP. The sequence is that of NAD kinase from Acidovorax ebreus (strain TPSY) (Diaphorobacter sp. (strain TPSY)).